The chain runs to 66 residues: Large ribosomal subunit protein bL32 (66 aa).

Residues 1–19 are compositionally biased toward basic residues; that stretch reads MAVPKRKMSRSNTRARRSQ. Residues 1–20 form a disordered region; it reads MAVPKRKMSRSNTRARRSQW.

The protein belongs to the bacterial ribosomal protein bL32 family.

This Beutenbergia cavernae (strain ATCC BAA-8 / DSM 12333 / CCUG 43141 / JCM 11478 / NBRC 16432 / NCIMB 13614 / HKI 0122) protein is Large ribosomal subunit protein bL32.